The sequence spans 125 residues: Small ribosomal subunit protein uS12 (125 aa).

D89 bears the 3-methylthioaspartic acid mark. Positions 100-125 are disordered; it reads GSLDTQGVKDRKQSRSKYGAKRPKAA. Positions 113-125 are enriched in basic residues; it reads SRSKYGAKRPKAA.

This sequence belongs to the universal ribosomal protein uS12 family. In terms of assembly, part of the 30S ribosomal subunit. Contacts proteins S8 and S17. May interact with IF1 in the 30S initiation complex.

With S4 and S5 plays an important role in translational accuracy. Its function is as follows. Interacts with and stabilizes bases of the 16S rRNA that are involved in tRNA selection in the A site and with the mRNA backbone. Located at the interface of the 30S and 50S subunits, it traverses the body of the 30S subunit contacting proteins on the other side and probably holding the rRNA structure together. The combined cluster of proteins S8, S12 and S17 appears to hold together the shoulder and platform of the 30S subunit. This chain is Small ribosomal subunit protein uS12, found in Dechloromonas aromatica (strain RCB).